Consider the following 226-residue polypeptide: High affinity heme transporter (226 aa).

The N-terminal stretch at 1 to 20 (MISLKIYFVLIFLFLKGINS) is a signal peptide. The heme binding stretch occupies residues 72-101 (CDTTILSETNNVTGSCYVANCANDTVLEIC). The GPI-anchor amidated serine moiety is linked to residue S199. Residues 200–226 (SASSTIFKPSYFISCLLSVGLYLVLNF) constitute a propeptide, removed in mature form.

It localises to the cell membrane. The protein localises to the vacuole membrane. High affinity heme transporter involved in the assimilation of exogenous heme during conditions of low cellular iron. The protein is High affinity heme transporter of Schizosaccharomyces pombe (strain 972 / ATCC 24843) (Fission yeast).